The chain runs to 60 residues: MAVQQNKKSPSKRGMHRSHDFLVNPPTAIEPTTGESHLRHHISPNGFYRGRKILKTKADE.

Positions 1 to 60 (MAVQQNKKSPSKRGMHRSHDFLVNPPTAIEPTTGESHLRHHISPNGFYRGRKILKTKADE) are disordered. The span at 49 to 60 (RGRKILKTKADE) shows a compositional bias: basic residues.

The protein belongs to the bacterial ribosomal protein bL32 family.

The chain is Large ribosomal subunit protein bL32 from Bordetella avium (strain 197N).